A 204-amino-acid polypeptide reads, in one-letter code: Nicotine blue oxidoreductase (204 aa).

Homotetramer. The cofactor is FMN.

It carries out the reaction 3,3'-bipyridine-2,2',5,5',6,6'-hexol + NADP(+) = (E)-2,2',5,5'-tetrahydroxy-6H,6'H-(3,3'-bipyridinylidene)-6,6'-dione + NADPH + 3 H(+). The catalysed reaction is 3,3'-bipyridine-2,2',5,5',6,6'-hexol + NAD(+) = (E)-2,2',5,5'-tetrahydroxy-6H,6'H-(3,3'-bipyridinylidene)-6,6'-dione + NADH + 3 H(+). Its pathway is alkaloid degradation; nicotine degradation. In terms of biological role, catalyzes the reduction of nicotine blue to its hydroquinone form. Nicotine blue is the name given to the compound formed by the autocatalytic condensation of two molecules of 2,3,6-trihydroxypyridine, an intermediate in the nicotine degradation pathway. May play a role in preventing the intracellular formation of nicotine blue semiquinone radicals, which by redox cycling would lead to the formation of toxic reactive oxygen species. Besides nicotine blue, several other quinones are reduced by nboR. This is Nicotine blue oxidoreductase (nboR) from Paenarthrobacter nicotinovorans (Arthrobacter nicotinovorans).